The sequence spans 568 residues: Glucose-6-phosphate isomerase, cytosolic (568 aa).

The active-site Proton donor is the E360. Active-site residues include H391 and K516.

The protein belongs to the GPI family. In terms of assembly, homodimer.

The protein resides in the cytoplasm. The catalysed reaction is alpha-D-glucose 6-phosphate = beta-D-fructose 6-phosphate. The protein operates within carbohydrate degradation; glycolysis; D-glyceraldehyde 3-phosphate and glycerone phosphate from D-glucose: step 2/4. This chain is Glucose-6-phosphate isomerase, cytosolic (PGIC), found in Oenothera sinuata var. hirsuta (Mexican evening primrose).